The chain runs to 567 residues: Laccase-3 (567 aa).

The first 24 residues, 1–24 (MASSSSSRLLFLLSCSVLALLAGA), serve as a signal peptide directing secretion. Plastocyanin-like domains are found at residues 32–148 (IVQE…PREN) and 158–310 (REVP…YDCG). An N-linked (GlcNAc...) asparagine glycan is attached at Asn78. Cu cation-binding residues include His82, His84, His127, and His129. N-linked (GlcNAc...) asparagine glycosylation is found at Asn148, Asn187, Asn203, Asn298, Asn330, Asn379, and Asn389. The Plastocyanin-like 3 domain maps to 415–551 (DFPAYPPVQF…AMAFLVEDGY (137 aa)). 7 residues coordinate Cu cation: His468, His471, His473, His530, Cys531, His532, and His536.

This sequence belongs to the multicopper oxidase family. It depends on Cu cation as a cofactor.

The protein resides in the secreted. It is found in the extracellular space. It localises to the apoplast. The catalysed reaction is 4 hydroquinone + O2 = 4 benzosemiquinone + 2 H2O. In terms of biological role, lignin degradation and detoxification of lignin-derived products. The chain is Laccase-3 (LAC3) from Oryza sativa subsp. japonica (Rice).